Reading from the N-terminus, the 424-residue chain is MFVDKARIFVKSGDGGDGAVSFRREKYIPLGGPDGGDGGEGGDVILVVDPNMTTLLDFKYKRKYVSERGQNGQGAKCYGRDGKDLYIKVPMGTIIRDVETDKIMADLAHKDDKFVIVKGGRGGKGNVKFCTPTRQAPNFAQPGMPGEERWISLELKLLADVGLIGFPNVGKSTLLSVASKARPKIANYHFTTITPNLGVVDVSGISSFVMADIPGIIEGASEGVGLGFEFLRHIERTRLLVHVVDISGSEGRDPLEDFLKINEELKKYNIKLWDRPQIVAANKADMVYDDDQFNKFREELNKLGYKNVFKISAATRMGVEDLLKECARVLSTIPVTDMEIPEEERFVPEDKHFTYTIRKEGDTYIVEGTFVDRLLASVNVNEPDSFRYFHKVLRNKGVMAELEEMGIKDGDMVRLNDFEFEFLK.

One can recognise an Obg domain in the interval 1-158; the sequence is MFVDKARIFV…RWISLELKLL (158 aa). Positions 159 to 331 constitute an OBG-type G domain; sequence ADVGLIGFPN…LLKECARVLS (173 aa). GTP-binding positions include 165–172, 190–194, 212–215, 282–285, and 312–314; these read GFPNVGKS, FTTIT, DIPG, NKAD, and SAA. Positions 172 and 192 each coordinate Mg(2+). Positions 345–424 constitute an OCT domain; the sequence is RFVPEDKHFT…LNDFEFEFLK (80 aa).

It belongs to the TRAFAC class OBG-HflX-like GTPase superfamily. OBG GTPase family. In terms of assembly, monomer. Mg(2+) serves as cofactor.

The protein resides in the cytoplasm. Functionally, an essential GTPase which binds GTP, GDP and possibly (p)ppGpp with moderate affinity, with high nucleotide exchange rates and a fairly low GTP hydrolysis rate. Plays a role in control of the cell cycle, stress response, ribosome biogenesis and in those bacteria that undergo differentiation, in morphogenesis control. This chain is GTPase Obg, found in Clostridium acetobutylicum (strain ATCC 824 / DSM 792 / JCM 1419 / IAM 19013 / LMG 5710 / NBRC 13948 / NRRL B-527 / VKM B-1787 / 2291 / W).